The following is a 204-amino-acid chain: LexA repressor (204 aa).

A DNA-binding region (H-T-H motif) is located at residues 31–51; that stretch reads VREICAKVGLSSTSTVHGHLS. Catalysis depends on for autocatalytic cleavage activity residues serine 128 and lysine 165.

It belongs to the peptidase S24 family. As to quaternary structure, homodimer.

It carries out the reaction Hydrolysis of Ala-|-Gly bond in repressor LexA.. In terms of biological role, represses a number of genes involved in the response to DNA damage (SOS response), including recA and lexA. In the presence of single-stranded DNA, RecA interacts with LexA causing an autocatalytic cleavage which disrupts the DNA-binding part of LexA, leading to derepression of the SOS regulon and eventually DNA repair. This is LexA repressor from Clostridium acetobutylicum (strain ATCC 824 / DSM 792 / JCM 1419 / IAM 19013 / LMG 5710 / NBRC 13948 / NRRL B-527 / VKM B-1787 / 2291 / W).